Reading from the N-terminus, the 223-residue chain is Ribonuclease HII (223 aa).

The 219-residue stretch at 1–219 (MMIAGIDEAG…VENIREELEK (219 aa)) folds into the RNase H type-2 domain. Aspartate 7, glutamate 8, and aspartate 105 together coordinate a divalent metal cation.

This sequence belongs to the RNase HII family. Mn(2+) is required as a cofactor. Requires Mg(2+) as cofactor.

The protein resides in the cytoplasm. It catalyses the reaction Endonucleolytic cleavage to 5'-phosphomonoester.. In terms of biological role, endonuclease that specifically degrades the RNA of RNA-DNA hybrids. This is Ribonuclease HII from Methanosarcina acetivorans (strain ATCC 35395 / DSM 2834 / JCM 12185 / C2A).